The primary structure comprises 333 residues: Ig gamma-2B chain C region (333 aa).

Ig-like domains follow at residues 6–96 (PSVY…KKVE), 124–223 (PSVF…KTIS), and 232–328 (PQVY…KSIS). 3 disulfides stabilise this stretch: Cys27–Cys80, Cys147–Cys207, and Cys253–Cys311.

This chain is Ig gamma-2B chain C region (Igh-1a), found in Rattus norvegicus (Rat).